Reading from the N-terminus, the 177-residue chain is B-phycoerythrin beta chain (177 aa).

Cys50 and Cys61 together coordinate phycourobilin. Asn72 bears the N4-methylasparagine mark. Residues Cys82 and Cys158 each coordinate (2R,3E)-phycoerythrobilin.

This sequence belongs to the phycobiliprotein family. In terms of assembly, heteromer of 6 alpha, 6 beta and one gamma chain. Contains two covalently linked phycoerythrobilin chromophores and one covalently linked phycourobilin chromophore.

It localises to the plastid. The protein localises to the chloroplast thylakoid membrane. In terms of biological role, light-harvesting photosynthetic bile pigment-protein from the phycobiliprotein complex. The chain is B-phycoerythrin beta chain (cpeB) from Porphyridium sordidum (Red alga).